The chain runs to 447 residues: Argininosuccinate synthase (447 aa).

ATP is bound by residues 17 to 25 and alanine 43; that span reads AFSGGLDTS. Tyrosine 99 provides a ligand contact to L-citrulline. Residues glycine 129 and threonine 131 each coordinate ATP. Residues threonine 131, asparagine 135, and aspartate 136 each contribute to the L-aspartate site. Asparagine 135 provides a ligand contact to L-citrulline. Aspartate 136 provides a ligand contact to ATP. Residues arginine 139 and serine 192 each contribute to the L-citrulline site. Aspartate 194 lines the ATP pocket. L-citrulline-binding residues include threonine 201, glutamate 203, and glutamate 280.

Belongs to the argininosuccinate synthase family. Type 2 subfamily. In terms of assembly, homotetramer.

It is found in the cytoplasm. The enzyme catalyses L-citrulline + L-aspartate + ATP = 2-(N(omega)-L-arginino)succinate + AMP + diphosphate + H(+). The protein operates within amino-acid biosynthesis; L-arginine biosynthesis; L-arginine from L-ornithine and carbamoyl phosphate: step 2/3. This Klebsiella pneumoniae subsp. pneumoniae (strain ATCC 700721 / MGH 78578) protein is Argininosuccinate synthase.